We begin with the raw amino-acid sequence, 357 residues long: NADH-quinone oxidoreductase subunit H (357 aa).

The next 8 helical transmembrane spans lie at 26–46, 92–112, 127–147, 164–184, 203–223, 259–279, 294–314, and 329–349; these read LVKIIAVVAPLMGAVAYLTLW, ALFVIAPIMTIMPALAAWAVI, LLFVMAITSLEVYGVIVAGWA, MISYEIAMGFVLVIILMVTGS, GLTFLSWNWLPLLPMFFIYII, FFLAEYANMWLISIMATLMFL, VPGWIWLGLKTLMVVTMFIWF, and LGWKVFIPLTLVYLLIVAIWM.

Belongs to the complex I subunit 1 family. NDH-1 is composed of 14 different subunits. Subunits NuoA, H, J, K, L, M, N constitute the membrane sector of the complex.

The protein localises to the cell inner membrane. It catalyses the reaction a quinone + NADH + 5 H(+)(in) = a quinol + NAD(+) + 4 H(+)(out). Its function is as follows. NDH-1 shuttles electrons from NADH, via FMN and iron-sulfur (Fe-S) centers, to quinones in the respiratory chain. The immediate electron acceptor for the enzyme in this species is believed to be ubiquinone. Couples the redox reaction to proton translocation (for every two electrons transferred, four hydrogen ions are translocated across the cytoplasmic membrane), and thus conserves the redox energy in a proton gradient. This subunit may bind ubiquinone. The sequence is that of NADH-quinone oxidoreductase subunit H from Janthinobacterium sp. (strain Marseille) (Minibacterium massiliensis).